A 148-amino-acid chain; its full sequence is uncharacterized protein (148 aa).

Positions 21, 24, 88, and 117 each coordinate [4Fe-4S] cluster.

This sequence belongs to the complex I 20 kDa subunit family. [4Fe-4S] cluster is required as a cofactor.

This is an uncharacterized protein from Methanocaldococcus jannaschii (strain ATCC 43067 / DSM 2661 / JAL-1 / JCM 10045 / NBRC 100440) (Methanococcus jannaschii).